The chain runs to 635 residues: Membrane protein insertase YidC (635 aa).

Residues 8-28 (LILAMVLSALVMLVWSIFFAP) form a helical membrane-spanning segment. Residues 33 to 61 (PAQDTPAASTQGTAQPEAGGPATPGAVPQ) form a disordered region. 4 helical membrane passes run 396 to 416 (MIGN…LLVF), 470 to 490 (LPVL…FVTI), 528 to 548 (SFLH…SMWM), and 564 to 584 (IFAW…SGLV). A disordered region spans residues 615–635 (IRSSLPSRAKAGDKGGDKGGK). Residues 624–635 (KAGDKGGDKGGK) show a composition bias toward basic and acidic residues.

Belongs to the OXA1/ALB3/YidC family. Type 1 subfamily. As to quaternary structure, interacts with the Sec translocase complex via SecD. Specifically interacts with transmembrane segments of nascent integral membrane proteins during membrane integration.

The protein localises to the cell inner membrane. Its function is as follows. Required for the insertion and/or proper folding and/or complex formation of integral membrane proteins into the membrane. Involved in integration of membrane proteins that insert both dependently and independently of the Sec translocase complex, as well as at least some lipoproteins. Aids folding of multispanning membrane proteins. The sequence is that of Membrane protein insertase YidC from Paracoccus denitrificans (strain Pd 1222).